The chain runs to 254 residues: 5'-nucleotidase SurE (254 aa).

The a divalent metal cation site is built by D8, D9, S38, and N91.

Belongs to the SurE nucleotidase family. Requires a divalent metal cation as cofactor.

The protein localises to the cytoplasm. It carries out the reaction a ribonucleoside 5'-phosphate + H2O = a ribonucleoside + phosphate. Its function is as follows. Nucleotidase that shows phosphatase activity on nucleoside 5'-monophosphates. The chain is 5'-nucleotidase SurE from Anaeromyxobacter sp. (strain Fw109-5).